The sequence spans 338 residues: Tagatose 1,6-diphosphate aldolase (338 aa).

Belongs to the aldolase LacD family.

It carries out the reaction D-tagatofuranose 1,6-bisphosphate = D-glyceraldehyde 3-phosphate + dihydroxyacetone phosphate. It functions in the pathway carbohydrate metabolism; D-tagatose 6-phosphate degradation; D-glyceraldehyde 3-phosphate and glycerone phosphate from D-tagatose 6-phosphate: step 2/2. The chain is Tagatose 1,6-diphosphate aldolase from Listeria monocytogenes serovar 1/2a (strain ATCC BAA-679 / EGD-e).